A 214-amino-acid polypeptide reads, in one-letter code: Adenylate kinase (214 aa).

10–15 (GAGKGT) is a binding site for ATP. The interval 30 to 59 (STGDMLRAAVKAGTPLGLEAKKVMDAGQLV) is NMP. AMP contacts are provided by residues Thr31, Arg36, 57–59 (QLV), 85–88 (GFPR), and Gln92. The segment at 122-159 (GRRVHPGSGRVYHVVFNPPKVEGKDDVTGEDLAIRPDD) is LID. ATP is bound by residues Arg123 and 132-133 (VY). AMP contacts are provided by Arg156 and Arg167. ATP is bound at residue Gln200.

This sequence belongs to the adenylate kinase family. As to quaternary structure, monomer.

The protein resides in the cytoplasm. It catalyses the reaction AMP + ATP = 2 ADP. It functions in the pathway purine metabolism; AMP biosynthesis via salvage pathway; AMP from ADP: step 1/1. Catalyzes the reversible transfer of the terminal phosphate group between ATP and AMP. Plays an important role in cellular energy homeostasis and in adenine nucleotide metabolism. This Shewanella oneidensis (strain ATCC 700550 / JCM 31522 / CIP 106686 / LMG 19005 / NCIMB 14063 / MR-1) protein is Adenylate kinase.